A 313-amino-acid chain; its full sequence is MSAVVIEPGVTQRQAGKPAFEANKLSKRLHRLVGQAIGDFNMIEPGDKLMVCVSGGKDSYALLDILLNLQQRAPIDFSLVAVNLDQKQPDFPEHVLPEYLASRGVPFHIENQDTYSIVKRVVPEGKTMCSLCSRLRRGILYRVAGELGATKIALGHHRDDMLQTLFLNMFFGAKLKGMPPKLVSDDGRHVVIRPLAYVPEHDLEAWAAHRQFPIIPCTLCGSQENLQRKQIAQMLRDWERQHPGRLDNMASALANVVPSHLQDRNLYPFTTLQATGRADELGDKAFDDDETCAPPGAASVIEAAMPIRWHGQG.

A PP-loop motif motif is present at residues 54-59 (SGGKDS). The [4Fe-4S] cluster site is built by Cys129, Cys132, and Cys220.

It belongs to the TtcA family. Homodimer. Mg(2+) is required as a cofactor. It depends on [4Fe-4S] cluster as a cofactor.

It localises to the cytoplasm. The enzyme catalyses cytidine(32) in tRNA + S-sulfanyl-L-cysteinyl-[cysteine desulfurase] + AH2 + ATP = 2-thiocytidine(32) in tRNA + L-cysteinyl-[cysteine desulfurase] + A + AMP + diphosphate + H(+). The protein operates within tRNA modification. Its function is as follows. Catalyzes the ATP-dependent 2-thiolation of cytidine in position 32 of tRNA, to form 2-thiocytidine (s(2)C32). The sulfur atoms are provided by the cysteine/cysteine desulfurase (IscS) system. The protein is tRNA-cytidine(32) 2-sulfurtransferase of Methylibium petroleiphilum (strain ATCC BAA-1232 / LMG 22953 / PM1).